The sequence spans 493 residues: 3-octaprenyl-4-hydroxybenzoate carboxy-lyase (493 aa).

Asparagine 172 contacts Mn(2+). Residues 175-177, 189-191, and 194-195 contribute to the prenylated FMN site; these read IYR, RWL, and RG. Glutamate 238 serves as a coordination point for Mn(2+). Aspartate 287 serves as the catalytic Proton donor.

It belongs to the UbiD family. Homohexamer. It depends on prenylated FMN as a cofactor. Mn(2+) is required as a cofactor.

The protein resides in the cell membrane. It catalyses the reaction a 4-hydroxy-3-(all-trans-polyprenyl)benzoate + H(+) = a 2-(all-trans-polyprenyl)phenol + CO2. The protein operates within cofactor biosynthesis; ubiquinone biosynthesis. Catalyzes the decarboxylation of 3-octaprenyl-4-hydroxy benzoate to 2-octaprenylphenol, an intermediate step in ubiquinone biosynthesis. This is 3-octaprenyl-4-hydroxybenzoate carboxy-lyase from Shewanella baltica (strain OS155 / ATCC BAA-1091).